Here is a 401-residue protein sequence, read N- to C-terminus: Argininosuccinate synthase (401 aa).

An ATP-binding site is contributed by 8 to 16 (AYSGGLDTS). Y85 is a binding site for L-citrulline. G115 is an ATP binding site. Residues T117, N121, and D122 each contribute to the L-aspartate site. N121 contacts L-citrulline. L-citrulline is bound by residues R125, S173, E258, and Y270.

This sequence belongs to the argininosuccinate synthase family. Type 1 subfamily. Homotetramer.

Its subcellular location is the cytoplasm. It catalyses the reaction L-citrulline + L-aspartate + ATP = 2-(N(omega)-L-arginino)succinate + AMP + diphosphate + H(+). Its pathway is amino-acid biosynthesis; L-arginine biosynthesis; L-arginine from L-ornithine and carbamoyl phosphate: step 2/3. The sequence is that of Argininosuccinate synthase from Staphylococcus carnosus (strain TM300).